Here is a 226-residue protein sequence, read N- to C-terminus: Methylamine utilization ferredoxin-type protein MauM (226 aa).

4Fe-4S ferredoxin-type domains lie at 59–87, 95–127, 136–172, and 180–211; these read PEPE…LASW, TPYF…PLLT, VAVL…LKQI, and QIPT…LLPR. Positions 67, 70, 73, 77, 105, 108, 113, 117, 145, 153, 156, 160, 189, 192, 195, and 199 each coordinate [4Fe-4S] cluster.

Its pathway is one-carbon metabolism; methylamine degradation. Functionally, involved in electron transfer. This Methylophilus methylotrophus (Bacterium W3A1) protein is Methylamine utilization ferredoxin-type protein MauM (mauM).